Here is a 395-residue protein sequence, read N- to C-terminus: General transcription factor IIH subunit 2 (395 aa).

Residues 60 to 236 enclose the VWFA domain; that stretch reads HLYVVVDGSR…HYKELLTHHV (177 aa). Tyrosine 95 is subject to Phosphotyrosine. The C4-type zinc-finger motif lies at 291–308; the sequence is CPQCRAKYCELPVECKIC.

The protein belongs to the GTF2H2 family. In terms of assembly, component of the TFIID-containing RNA polymerase II pre-initiation complex that is composed of TBP and at least GTF2A1, GTF2A2, GTF2E1, GTF2E2, GTF2F1, GTF2H2, GTF2H3, GTF2H4, GTF2H5, GTF2B, TCEA1, ERCC2 and ERCC3. Component of the 7-subunit TFIIH core complex composed of XPB/ERCC3, XPD/ERCC2, GTF2H1, GTF2H2, GTF2H3, GTF2H4 and GTF2H5, which is active in NER. The core complex associates with the 3-subunit CDK-activating kinase (CAK) module composed of CCNH/cyclin H, CDK7 and MNAT1 to form the 10-subunit holoenzyme (holo-TFIIH) active in transcription. Interacts with XPB, XPD, GTF2H1 and GTF2H3.

Its subcellular location is the nucleus. Functionally, component of the general transcription and DNA repair factor IIH (TFIIH) core complex, which is involved in general and transcription-coupled nucleotide excision repair (NER) of damaged DNA and, when complexed to CAK, in RNA transcription by RNA polymerase II. In NER, TFIIH acts by opening DNA around the lesion to allow the excision of the damaged oligonucleotide and its replacement by a new DNA fragment. In transcription, TFIIH has an essential role in transcription initiation. When the pre-initiation complex (PIC) has been established, TFIIH is required for promoter opening and promoter escape. Phosphorylation of the C-terminal tail (CTD) of the largest subunit of RNA polymerase II by the kinase module CAK controls the initiation of transcription. The N-terminus of GTF2H2 interacts with and regulates XPD whereas an intact C-terminus is required for a successful escape of RNAP II form the promoter. This chain is General transcription factor IIH subunit 2 (GTF2H2), found in Bos taurus (Bovine).